Here is a 147-residue protein sequence, read N- to C-terminus: Cytochrome c-type biogenesis protein CcmE (147 aa).

The Cytoplasmic portion of the chain corresponds to 1–7; sequence MKPRHKR. The helical; Signal-anchor for type II membrane protein transmembrane segment at 8–28 threads the bilayer; sequence AAIIAGGLAALGIAAYLVLNA. Residues 29–147 are Periplasmic-facing; sequence FQSNLVFFFS…QIQKTIKSLK (119 aa). Positions 121 and 125 each coordinate heme.

Belongs to the CcmE/CycJ family.

The protein resides in the cell inner membrane. Heme chaperone required for the biogenesis of c-type cytochromes. Transiently binds heme delivered by CcmC and transfers the heme to apo-cytochromes in a process facilitated by CcmF and CcmH. The protein is Cytochrome c-type biogenesis protein CcmE of Albidiferax ferrireducens (strain ATCC BAA-621 / DSM 15236 / T118) (Rhodoferax ferrireducens).